Reading from the N-terminus, the 90-residue chain is UPF0237 protein MK1213 (90 aa).

The region spanning 5–79 (VVTVIGADRP…EELGVDVIVQ (75 aa)) is the ACT domain.

It belongs to the UPF0237 family.

In Methanopyrus kandleri (strain AV19 / DSM 6324 / JCM 9639 / NBRC 100938), this protein is UPF0237 protein MK1213.